The primary structure comprises 338 residues: mRNA decay activator protein ZFP36L1 (338 aa).

The interval Met-1–Asn-111 is necessary and sufficient for the association with mRNA decay enzymes and mRNA decay activation. Residue Ser-54 is modified to Phosphoserine; by MAPKAPK2. Ser-90 carries the post-translational modification Phosphoserine; by PKB/AKT1. At Ser-92 the chain carries Phosphoserine; by PKB/AKT1 and MAPKAPK2. The disordered stretch occupies residues Glu-93–Ser-113. A compositionally biased stretch (polar residues) spans Thr-101–Ser-113. 2 C3H1-type zinc fingers span residues Arg-114–His-142 and Lys-152–Glu-180. The tract at residues Leu-185–Asp-338 is necessary for mRNA decay activation. A Phosphoserine; by PKB/AKT1 and MAPKAPK2 modification is found at Ser-203. The disordered stretch occupies residues Ser-273 to Asp-338. Positions Tyr-305 to Ser-318 are enriched in low complexity. Ser-318 is subject to Phosphoserine. Ser-334 is modified (phosphoserine; by RPS6KA1).

Associates with the cytoplasmic CCR4-NOT deadenylase and RNA exosome complexes to trigger ARE-containing mRNA deadenylation and decay processes. Interacts with CNOT1. Interacts (via N-terminus) with CNOT6. Interacts with CNOT7; this interaction is inhibited in response to phorbol 12-myristate 13-acetate (PMA) treatment in a p38 MAPK-dependent manner. Interacts with DCP1A. Interacts (via N-terminus) with DCP2. Interacts (via N-terminus) with EXOSC2. Interacts with XRN1. Interacts (via phosphorylated form) with YWHAB; this interaction occurs in a protein kinase AKT1-dependent manner. Interacts (via phosphorylated form) with YWHAZ; this interaction occurs in a p38 MAPK- and AKT-signaling pathways. In terms of processing, phosphorylated. Phosphorylated by RPS6KA1 at Ser-334 upon phorbol 12-myristate 13-acetate (PMA) treatment; this phosphorylation results in dissociation of the CCR4-NOT deadenylase complex and induces p38 MAPK-mediated stabilization of the low-density lipoprotein receptor LDLR mRNA. Phosphorylated by protein kinase AKT1 at Ser-92 and Ser-203 in response to insulin; these phosphorylations stabilize ZFP36L1, increase the association with 14-3-3 proteins and mediate ARE-containing mRNA stabilization. AKT1-mediated phosphorylation at Ser-92 does not impair ARE-containing RNA-binding. Phosphorylated at Ser-54, Ser-92 and Ser-203 by MAPKAPK2; these phosphorylations increase the association with 14-3-3 proteins and mediate ARE-containing mRNA stabilization in a protein kinase AKT1-independent manner. MAPKAPK2-mediated phosphorylations at Ser-54, Ser-92 and Ser-203 do not impair ARE-containing RNA-binding. Phosphorylations increase the association with 14-3-3 proteins and mediate ARE-containing mRNA stabilization during early adipogenesis in a p38 MAPK- and AKT-dependent manner. Phosphorylated by protein kinase AKT1 at Ser-92. Post-translationally, ubiquitinated. Ubiquitination leads to proteasomal degradation, a process inhibited by phosphorylations at Ser-90, Ser-92 and Ser-203.

It is found in the nucleus. The protein localises to the cytoplasm. Its subcellular location is the cytoplasmic granule. The protein resides in the P-body. Zinc-finger RNA-binding protein that destabilizes several cytoplasmic AU-rich element (ARE)-containing mRNA transcripts by promoting their poly(A) tail removal or deadenylation, and hence provide a mechanism for attenuating protein synthesis. Acts as a 3'-untranslated region (UTR) ARE mRNA-binding adapter protein to communicate signaling events to the mRNA decay machinery. Functions by recruiting the CCR4-NOT deadenylase complex and components of the cytoplasmic RNA decay machinery to the bound ARE-containing mRNAs, and hence promotes ARE-mediated mRNA deadenylation and decay processes. Also induces the degradation of ARE-containing mRNAs even in absence of poly(A) tail. Binds to 3'-UTR ARE of numerous mRNAs. Positively regulates early adipogenesis by promoting ARE-mediated mRNA decay of immediate early genes (IEGs). Promotes ARE-mediated mRNA decay of mineralocorticoid receptor NR3C2 mRNA in response to hypertonic stress. Negatively regulates hematopoietic/erythroid cell differentiation by promoting ARE-mediated mRNA decay of the transcription factor STAT5B mRNA. Positively regulates monocyte/macrophage cell differentiation by promoting ARE-mediated mRNA decay of the cyclin-dependent kinase CDK6 mRNA. Promotes degradation of ARE-containing pluripotency-associated mRNAs in embryonic stem cells (ESCs), such as NANOG, through a fibroblast growth factor (FGF)-induced MAPK-dependent signaling pathway, and hence attenuates ESC self-renewal and positively regulates mesendoderm differentiation. May play a role in mediating pro-apoptotic effects in malignant B-cells by promoting ARE-mediated mRNA decay of BCL2 mRNA. In association with ZFP36L2 maintains quiescence on developing B lymphocytes by promoting ARE-mediated decay of several mRNAs encoding cell cycle regulators that help B cells progress through the cell cycle, and hence ensuring accurate variable-diversity-joining (VDJ) recombination and functional immune cell formation. Together with ZFP36L2 is also necessary for thymocyte development and prevention of T-cell acute lymphoblastic leukemia (T-ALL) transformation by promoting ARE-mediated mRNA decay of the oncogenic transcription factor NOTCH1 mRNA. Participates in the delivery of target ARE-mRNAs to processing bodies (PBs). In addition to its cytosolic mRNA-decay function, plays a role in the regulation of nuclear mRNA 3'-end processing; modulates mRNA 3'-end maturation efficiency of the DLL4 mRNA through binding with an ARE embedded in a weak noncanonical polyadenylation (poly(A)) signal in endothelial cells. Also involved in the regulation of stress granule (SG) and P-body (PB) formation and fusion. Plays a role in vasculogenesis and endocardial development. Plays a role in the regulation of keratinocyte proliferation, differentiation and apoptosis. Plays a role in myoblast cell differentiation. This chain is mRNA decay activator protein ZFP36L1, found in Rattus norvegicus (Rat).